Consider the following 288-residue polypeptide: QGYSTVAFDGPPSYGHAPSHHAAQFSNHSFKHEDPIAQQTSLGDQQYSVPPPVYGCHTPTDSCTGSQALLLRTPYNSDNLYQMTSQLECMTWNQMNLGSTLKGHATGYENENHTAPMLYSCGAQYRIHTHGVFRGIQDVRRVPGVAPTIVRSASETNEKRPFMCAYPGCNKRYFKLSHLQMHSRKHTGEKPYQCDFKDCERRFSRSDQLKRHQRRHTGVKPFQCKTCQRKFSRSDHLKTHTRTHTGKTSEKPFSCRWPSCQKKFARSDELVRHHNMHQRNMTKLQLAL.

Residues 1–21 (QGYSTVAFDGPPSYGHAPSHH) are disordered. The 9aaTAD signature appears at 90 to 98 (MTWNQMNLG). 3 consecutive C2H2-type zinc fingers follow at residues 162–186 (FMCA…SRKH), 192–216 (YQCD…QRRH), and 222–244 (FQCK…TRTH). Important for interaction with target DNA stretches follow at residues 206 to 220 (SDQL…TGVK) and 232 to 240 (SRSDHLKTH). Positions 247–249 (KTS) match the KTS motif motif. The C2H2-type 4 zinc finger occupies 253–277 (FSCRWPSCQKKFARSDELVRHHNMH).

It belongs to the EGR C2H2-type zinc-finger protein family.

Its subcellular location is the nucleus speckle. It localises to the nucleus. It is found in the nucleoplasm. The protein resides in the cytoplasm. Functionally, transcription factor that plays an important role in cellular development and cell survival. Recognizes and binds to the DNA sequence 5'-GCG(T/G)GGGCG-3'. Regulates the expression of numerous target genes. Plays an essential role for development of the urogenital system. It has a tumor suppressor as well as an oncogenic role in tumor formation. Function may be isoform-specific: isoforms lacking the KTS motif may act as transcription factors. Isoforms containing the KTS motif may bind mRNA and play a role in mRNA metabolism or splicing. This is Wilms tumor protein homolog (WT1) from Alligator mississippiensis (American alligator).